A 363-amino-acid chain; its full sequence is Peptide chain release factor 2 (363 aa).

Glutamine 251 is modified (N5-methylglutamine).

Belongs to the prokaryotic/mitochondrial release factor family. Post-translationally, methylated by PrmC. Methylation increases the termination efficiency of RF2.

It is found in the cytoplasm. Its function is as follows. Peptide chain release factor 2 directs the termination of translation in response to the peptide chain termination codons UGA and UAA. In Helicobacter pylori (strain HPAG1), this protein is Peptide chain release factor 2.